We begin with the raw amino-acid sequence, 589 residues long: Phenylalanine--tRNA ligase beta subunit (589 aa).

Residues 302–377 form the B5 domain; that stretch reads LEVREERISV…IAYGYNNIKK (76 aa). Mg(2+)-binding residues include Asp355, Asp361, Glu364, and Asp365.

The protein belongs to the phenylalanyl-tRNA synthetase beta subunit family. Type 2 subfamily. Tetramer of two alpha and two beta subunits. Mg(2+) serves as cofactor.

Its subcellular location is the cytoplasm. The catalysed reaction is tRNA(Phe) + L-phenylalanine + ATP = L-phenylalanyl-tRNA(Phe) + AMP + diphosphate + H(+). The sequence is that of Phenylalanine--tRNA ligase beta subunit from Drosophila melanogaster (Fruit fly).